Consider the following 66-residue polypeptide: COP9 signalosome complex subunit 6a (66 aa).

The protein belongs to the peptidase M67A family. CSN6 subfamily. As to quaternary structure, component of the CSN complex, probably composed of CSN1, CSN2, CSN3, CSN4, CSN5 (CSN5A or CSN5B), CSN6 (CSN6A or CSN6B), CSN7 and CSN8.

Its subcellular location is the cytoplasm. It localises to the nucleus. Its function is as follows. Component of the COP9 signalosome complex (CSN), a complex involved in various cellular and developmental processes such as photomorphogenesis and auxin and jasmonate responses. The CSN complex is an essential regulator of the ubiquitin (Ubl) conjugation pathway by mediating the deneddylation of the cullin subunits of SCF-type E3 ligase complexes, leading to decrease the Ubl ligase activity of SCF. It is involved in repression of photomorphogenesis in darkness by regulating the activity of COP1-containing Ubl ligase complexes. The chain is COP9 signalosome complex subunit 6a (CSN6A) from Brassica oleracea (Wild cabbage).